Reading from the N-terminus, the 146-residue chain is Large ribosomal subunit protein uL15 (146 aa).

Residues 1–58 (MKLNELSPPKGARTARKRKGRGPGSGLGKTAGKGHKGQKARSGGGVRPGFEGGQMPVH) form a disordered region. Gly residues-rich tracts occupy residues 22-31 (GPGSGLGKTA) and 42-52 (SGGGVRPGFEG).

It belongs to the universal ribosomal protein uL15 family. Part of the 50S ribosomal subunit.

In terms of biological role, binds to the 23S rRNA. The polypeptide is Large ribosomal subunit protein uL15 (Desulfatibacillum aliphaticivorans).